The following is a 519-amino-acid chain: Seed lectin (519 aa).

Cystine bridges form between cysteine 249/cysteine 258 and cysteine 274/cysteine 293. Ricin B-type lectin domains are found at residues 261-387 and 390-518; these read ETRT…WRVG and VQPI…WVLF. The 1-alpha repeat unit spans residues 271–311; the sequence is DALCVDVAGALTSDGSRLILYPCGQQVNQKWTFHSDGTVRS. A carbohydrate contacts are provided by residues 276–279 and 296–298; these read DVAG and QVN. A 1-beta repeat occupies 312-352; it reads LGKCLATNNSKFGNLVVIYDCSKLAAEDISWDVSVGGTIMN. A disulfide bridge links cysteine 315 with cysteine 332. Residues 356 to 388 form a 1-gamma repeat; that stretch reads EDLALTSNKATRSTNLTMEVNTYSASQGWRVGN. Asparagine 370 carries an N-linked (GlcNAc...) asparagine glycan. One copy of the 2-alpha repeat lies at 401-438; the sequence is DDMCLEATDGNTNMWLEECVPNQREQSWALYSDGTIRV. 2 disulfide bridges follow: cysteine 404–cysteine 419 and cysteine 445–cysteine 464. A 2-beta repeat occupies 442–482; it reads RELCVTASSSTYDNWKVITILNCDGSNNQRWVFLADGSIST. Residues aspartate 454, 491-494, 505-508, and asparagine 512 each bind a carbohydrate; these read DVAR and HRPH. One copy of the 2-gamma repeat lies at 486–513; it reads QRLAMDVARSDVDLKKIILHRPHGDLNQ.

In the N-terminal section; belongs to the ribosome-inactivating protein family. Type 2 RIP subfamily. As to quaternary structure, heterotrimer consisting of Aalpha, Abeta and B chains with Abeta and B being disulfide-linked.

Its function is as follows. Seed lectin similar to type 2 ribosome-inactivating proteins. The Aalpha and Abeta chains constitute the rRNA glycosidase domain and the B chain the carbohydrate-binding lectin domain. Is predicted to have no glycosidase activity and, hence, to be non-toxic, due to small changes in both the nucleotide binding and carbohydrate binding capabilities. Binds galactose and derivatives with a preference for the beta-anomeric forms. Binds prophyrins. Has hemagglutinating activity towards rabbit and human erythrocytes. In Trichosanthes anguina (Snake gourd), this protein is Seed lectin.